Here is a 505-residue protein sequence, read N- to C-terminus: Protein MGF 505-4R (505 aa).

The protein belongs to the asfivirus MGF 505 family.

Plays a role in virus cell tropism, and may be required for efficient virus replication in macrophages. This is Protein MGF 505-4R from Ornithodoros (relapsing fever ticks).